Reading from the N-terminus, the 127-residue chain is Glycine cleavage system H protein 1 (127 aa).

The region spanning 20 to 101 is the Lipoyl-binding domain; sequence SVTVGITPYA…LGAGWFFRFI (82 aa). The residue at position 60 (Lys60) is an N6-lipoyllysine.

The protein belongs to the GcvH family. The glycine cleavage system is composed of four proteins: P, T, L and H. It depends on (R)-lipoate as a cofactor.

Its function is as follows. The glycine cleavage system catalyzes the degradation of glycine. The H protein shuttles the methylamine group of glycine from the P protein to the T protein. This is Glycine cleavage system H protein 1 from Pseudomonas syringae pv. tomato (strain ATCC BAA-871 / DC3000).